The primary structure comprises 179 residues: Cytochrome b6-f complex iron-sulfur subunit 1 (179 aa).

Residues 21–43 (LLTFGTVTGVALGALYPVVNYFI) form a helical membrane-spanning segment. Residues 61 to 162 (GNDVSVSKFL…AKTENDKIVL (102 aa)) enclose the Rieske domain. [2Fe-2S] cluster contacts are provided by Cys-108, His-110, Cys-126, and His-129. Cys-113 and Cys-128 are oxidised to a cystine.

The protein belongs to the Rieske iron-sulfur protein family. The 4 large subunits of the cytochrome b6-f complex are cytochrome b6, subunit IV (17 kDa polypeptide, PetD), cytochrome f and the Rieske protein, while the 4 small subunits are PetG, PetL, PetM and PetN. The complex functions as a dimer. The cofactor is [2Fe-2S] cluster.

It localises to the cellular thylakoid membrane. It catalyses the reaction 2 oxidized [plastocyanin] + a plastoquinol + 2 H(+)(in) = 2 reduced [plastocyanin] + a plastoquinone + 4 H(+)(out). In terms of biological role, component of the cytochrome b6-f complex, which mediates electron transfer between photosystem II (PSII) and photosystem I (PSI), cyclic electron flow around PSI, and state transitions. The chain is Cytochrome b6-f complex iron-sulfur subunit 1 from Nostoc sp. (strain PCC 7120 / SAG 25.82 / UTEX 2576).